A 101-amino-acid polypeptide reads, in one-letter code: Small ribosomal subunit protein uS14 (101 aa).

The protein belongs to the universal ribosomal protein uS14 family. Part of the 30S ribosomal subunit. Contacts proteins S3 and S10.

In terms of biological role, binds 16S rRNA, required for the assembly of 30S particles and may also be responsible for determining the conformation of the 16S rRNA at the A site. The sequence is that of Small ribosomal subunit protein uS14 from Klebsiella pneumoniae (strain 342).